The following is a 421-amino-acid chain: Acetate kinase (421 aa).

Asn7 contributes to the Mg(2+) binding site. Residue Lys14 participates in ATP binding. Position 91 (Arg91) interacts with substrate. Asp148 serves as the catalytic Proton donor/acceptor. ATP-binding positions include 208–212 and 283–285; these read HIGNG and DRR. Glu387 lines the Mg(2+) pocket.

This sequence belongs to the acetokinase family. Homodimer. Mg(2+) is required as a cofactor. Mn(2+) serves as cofactor.

It localises to the cytoplasm. It catalyses the reaction acetate + ATP = acetyl phosphate + ADP. It participates in metabolic intermediate biosynthesis; acetyl-CoA biosynthesis; acetyl-CoA from acetate: step 1/2. Functionally, catalyzes the formation of acetyl phosphate from acetate and ATP. Can also catalyze the reverse reaction. In Geobacter metallireducens (strain ATCC 53774 / DSM 7210 / GS-15), this protein is Acetate kinase.